A 386-amino-acid chain; its full sequence is S-adenosylmethionine synthase (386 aa).

ATP is bound at residue histidine 16. Aspartate 18 contributes to the Mg(2+) binding site. Position 44 (glutamate 44) interacts with K(+). Positions 57 and 100 each coordinate L-methionine. Residues 100–110 (QSPDINVGVDQ) form a flexible loop region. ATP contacts are provided by residues 164-166 (DGK), 231-232 (RF), aspartate 240, 246-247 (RK), alanine 263, and lysine 267. Aspartate 240 contributes to the L-methionine binding site. Lysine 271 serves as a coordination point for L-methionine.

Belongs to the AdoMet synthase family. Homotetramer; dimer of dimers. The cofactor is Mg(2+). K(+) is required as a cofactor.

Its subcellular location is the cytoplasm. The catalysed reaction is L-methionine + ATP + H2O = S-adenosyl-L-methionine + phosphate + diphosphate. The protein operates within amino-acid biosynthesis; S-adenosyl-L-methionine biosynthesis; S-adenosyl-L-methionine from L-methionine: step 1/1. Functionally, catalyzes the formation of S-adenosylmethionine (AdoMet) from methionine and ATP. The overall synthetic reaction is composed of two sequential steps, AdoMet formation and the subsequent tripolyphosphate hydrolysis which occurs prior to release of AdoMet from the enzyme. The protein is S-adenosylmethionine synthase of Sulfurovum sp. (strain NBC37-1).